Consider the following 397-residue polypeptide: Enoyl-[acyl-carrier-protein] reductase [NADH] (397 aa).

Residues 48–53 (GASTGY), 74–75 (FE), 111–112 (DA), and 139–140 (VA) contribute to the NAD(+) site. Y225 is a substrate binding site. Y235 serves as the catalytic Proton donor. Residues K244 and 273–275 (VVT) contribute to the NAD(+) site.

The protein belongs to the TER reductase family. Monomer.

The enzyme catalyses a 2,3-saturated acyl-[ACP] + NAD(+) = a (2E)-enoyl-[ACP] + NADH + H(+). The protein operates within lipid metabolism; fatty acid biosynthesis. In terms of biological role, involved in the final reduction of the elongation cycle of fatty acid synthesis (FAS II). Catalyzes the reduction of a carbon-carbon double bond in an enoyl moiety that is covalently linked to an acyl carrier protein (ACP). The protein is Enoyl-[acyl-carrier-protein] reductase [NADH] of Burkholderia mallei (strain NCTC 10247).